We begin with the raw amino-acid sequence, 262 residues long: Virulence regulon transcriptional activator VirF (262 aa).

Positions 161 to 258 (DQIRKIVEKN…GITPKKFYLY (98 aa)) constitute an HTH araC/xylS-type domain. DNA-binding regions (H-T-H motif) lie at residues 178-199 (SDIS…ESEK) and 225-248 (INDV…NEYY).

As to quaternary structure, homodimer.

Functionally, primary regulator of plasmid-encoded virulence genes. Activates the transcription of icsA (virG) and of virB, which is an activator of the ipaABCD virulence regulon. In Shigella dysenteriae, this protein is Virulence regulon transcriptional activator VirF (virF).